The following is a 278-amino-acid chain: Digeranylgeranylglyceryl phosphate synthase (278 aa).

The next 8 helical transmembrane spans lie at 12-32 (LKNC…ASYF), 34-54 (LAMV…CGFG), 92-112 (LVVM…MAVL), 129-149 (IIGN…GGIA), 153-173 (IDVT…REII), 204-224 (FLLI…FFGI), 226-246 (YMIS…KLVF), and 257-277 (SRNI…GSLF).

It belongs to the UbiA prenyltransferase family. DGGGP synthase subfamily. It depends on Mg(2+) as a cofactor.

Its subcellular location is the cell membrane. The enzyme catalyses sn-3-O-(geranylgeranyl)glycerol 1-phosphate + (2E,6E,10E)-geranylgeranyl diphosphate = 2,3-bis-O-(geranylgeranyl)-sn-glycerol 1-phosphate + diphosphate. Its pathway is membrane lipid metabolism; glycerophospholipid metabolism. Prenyltransferase that catalyzes the transfer of the geranylgeranyl moiety of geranylgeranyl diphosphate (GGPP) to the C2 hydroxyl of (S)-3-O-geranylgeranylglyceryl phosphate (GGGP). This reaction is the second ether-bond-formation step in the biosynthesis of archaeal membrane lipids. The protein is Digeranylgeranylglyceryl phosphate synthase of Methanococcus maripaludis (strain DSM 14266 / JCM 13030 / NBRC 101832 / S2 / LL).